Here is a 551-residue protein sequence, read N- to C-terminus: Cytochrome P450 monooxygenase virE (551 aa).

Positions 1–25 (MPKPWVVFGLGTLVLFLWRLNKIGR) are cleaved as a signal peptide. N-linked (GlcNAc...) asparagine glycosylation is present at asparagine 392. Cysteine 439 is a heme binding site.

It belongs to the cytochrome P450 family. Heme is required as a cofactor.

The protein operates within secondary metabolite biosynthesis. Functionally, cytochrome P450 monooxygenase; part of the gene cluster that mediates the biosynthesis of virensols and trichoxide, fungal natural products that contain or are derived from a salicylaldehyde core. The pathway begins with the synthesis of the reduced chain in virensol C by the highly reducing polyketide synthase virA via condensation of one acetate and 8 malonate units. VirA has interesting programming rules since the first 2 ketides are fully reduced, the 3 following ketides undergo beta-dehydration, and the last 3 ketides are only reduced to beta-hydroxys to yield the trihydroxy portion. The production of aldehyde virensol C by virA alone is surprising, since virA does not contain a reductase (R) domain that is typically associated with reductive product release in HRPKS. The cupin-domain enzyme virC is involved in enhancing virA product turnover. The short-chain dehydrogenase virB then oxidizes the C-7 alcohol of virensol C to a ketone, yielding virensol D. Virensol D is further transformed to salicylaldehyde 5-deoxyaurocitrin by the short-chain dehydrogenase virD. VirD catalyzes the dehydrogenation of C-3 to form the beta-ketone aldehyde, which is followed by the generation of the nucleophilic C-2 that is required for the intramolecular aldol condensation between C-2 and C-7, itself followed by dehydration and aromatization which leads to salicylaldehyde 5-deoxyaurocitrin. While the dehydrogenation of virensol D is definitely catalyzed by virD, the aldol condensation and dehydration may be uncatalyzed or assisted by virD. The short chain dehydrogenase virG then converts salicylaldehyde 5-deoxyaurocitrin into virensol B which is further hydroxylated by the cytochrome P450 monooxygenase virE to yield the hydroquinone virensol A. VirI then may oxidize virensol A to form the quinone, while virH performs the epoxidation. Finally, the two remaining short-chain dehydrogenases, virK and virL, are probably responsible for reducing the ketones to the corresponding alcohols to furnish the epoxycyclohexanol structure in trichoxide. The sequence is that of Cytochrome P450 monooxygenase virE from Hypocrea virens (strain Gv29-8 / FGSC 10586) (Gliocladium virens).